The chain runs to 364 residues: Envelope glycoprotein US27 (364 aa).

Over 1–36 (MTTSTTTTTNIMLQVSNVTNHTLNSTEIYQLFEYTR) the chain is Virion surface. N-linked (GlcNAc...) asparagine; by host glycans are attached at residues Asn-17, Asn-20, and Asn-24. Residues 37–57 (FGVWLMCIVGTFLNMLVITTI) form a helical membrane-spanning segment. Residues 58–69 (LYYRRKKKSPSD) lie on the Intravirion side of the membrane. A helical membrane pass occupies residues 70–90 (TYICNLAVADLLIVVGLPFFL). The Virion surface segment spans residues 91 to 103 (EYAKHHPKLSREV). A helical membrane pass occupies residues 104–124 (VCSGLNACFYICLFAGVCFLI). At 125 to 150 (NLSMDRYCVIVWGVELNRVRNNKRAT) the chain is on the intravirion side. Residues 151–171 (CWVVIFWILAALMGMPHYLMY) traverse the membrane as a helical segment. The Virion surface segment spans residues 172–188 (SHTNNECVGEFANETSG). Residues 189 to 209 (WFPVFLNTKVNICGYLAPIVL) form a helical membrane-spanning segment. Topologically, residues 210 to 234 (MAYTYNRMVRFIINYVGKWHMQTLH) are intravirion. Residues 235 to 255 (VLLVVVVSFASFWFPFNLALF) form a helical membrane-spanning segment. Topologically, residues 256-279 (LESIRLLSGTQNETLQTVITFCLY) are virion surface. Residues 280-300 (VGQFLAYVRACLNPGIYILVG) traverse the membrane as a helical segment. Residues 301 to 364 (TQMRKDMWTT…MESGEEEFLL (64 aa)) are Intravirion-facing. The interval 344 to 364 (KRTHYDRKHAPMESGEEEFLL) is disordered.

The protein belongs to the G-protein coupled receptor 1 family. As to quaternary structure, heterodimerizes with US28.

It is found in the virion. The protein resides in the host cell membrane. Its function is as follows. Plays an important role in spread of HCMV via the extracellular route. As a G-protein-coupled receptor (vGPCR), may activate signaling pathways important for virion assembly or egress processes. In Homo sapiens (Human), this protein is Envelope glycoprotein US27 (US27).